Here is a 599-residue protein sequence, read N- to C-terminus: NADH-quinone oxidoreductase subunit C/D (599 aa).

The segment at 1–190 (MMIDQIAQES…DPFELTRQKE (190 aa)) is NADH dehydrogenase I subunit C. Positions 214–599 (DFMFLNLGPN…IDFVMSDVDR (386 aa)) are NADH dehydrogenase I subunit D.

It in the N-terminal section; belongs to the complex I 30 kDa subunit family. In the C-terminal section; belongs to the complex I 49 kDa subunit family. NDH-1 is composed of 13 different subunits. Subunits NuoB, CD, E, F, and G constitute the peripheral sector of the complex.

Its subcellular location is the cell inner membrane. The catalysed reaction is a quinone + NADH + 5 H(+)(in) = a quinol + NAD(+) + 4 H(+)(out). NDH-1 shuttles electrons from NADH, via FMN and iron-sulfur (Fe-S) centers, to quinones in the respiratory chain. The immediate electron acceptor for the enzyme in this species is believed to be ubiquinone. Couples the redox reaction to proton translocation (for every two electrons transferred, four hydrogen ions are translocated across the cytoplasmic membrane), and thus conserves the redox energy in a proton gradient. The protein is NADH-quinone oxidoreductase subunit C/D of Photorhabdus laumondii subsp. laumondii (strain DSM 15139 / CIP 105565 / TT01) (Photorhabdus luminescens subsp. laumondii).